A 570-amino-acid chain; its full sequence is FERM domain-containing protein 5 (570 aa).

The FERM domain occupies tyrosine 17 to lysine 298. An interaction with ROCK1 region spans residues serine 308–proline 353. The tract at residues alanine 344–threonine 367 is disordered. A Phosphoserine modification is found at serine 375. A disordered region spans residues aspartate 385–serine 407. The segment covering histidine 388 to glycine 398 has biased composition (polar residues). Residues leucine 504–glutamate 524 form a helical membrane-spanning segment.

Interacts with CTNND1. Interacts with ITGB5 (via cytoplasmic domain) and ROCK1.

The protein localises to the membrane. It is found in the cell junction. The protein resides in the adherens junction. Its function is as follows. May be involved in regulation of cell migration. May regulate cell-matrix interactions via its interaction with ITGB5 and modifying ITGB5 cytoplasmic tail interactions such as with FERMT2 and TLN1. May regulate ROCK1 kinase activity possibly involved in regulation of actin stress fiber formation. This Homo sapiens (Human) protein is FERM domain-containing protein 5 (FRMD5).